A 242-amino-acid chain; its full sequence is MNSKLKFIYEGKAKKIFAYEDSDKVIIEFKDDATAFNALKKAKFEGKGELNCLISSKIFEFLIKNNIPTHYIGLKNNNSMIAQKIKIIPLEVVLRNTAYGSLCKQTTIKPGTVLESPLIDFYLKNDTLNDPLLTKDRINLLKIVDEEELDFISNMTLKINKLLKKFFYNIKLDLVDFKLEFGYNSNGQIVLGDEISPDNCRLWDLNQKNGMIVSLDKDRFRNDLGGFIEAYSEINKRINNFI.

It belongs to the SAICAR synthetase family.

It carries out the reaction 5-amino-1-(5-phospho-D-ribosyl)imidazole-4-carboxylate + L-aspartate + ATP = (2S)-2-[5-amino-1-(5-phospho-beta-D-ribosyl)imidazole-4-carboxamido]succinate + ADP + phosphate + 2 H(+). It functions in the pathway purine metabolism; IMP biosynthesis via de novo pathway; 5-amino-1-(5-phospho-D-ribosyl)imidazole-4-carboxamide from 5-amino-1-(5-phospho-D-ribosyl)imidazole-4-carboxylate: step 1/2. This chain is Phosphoribosylaminoimidazole-succinocarboxamide synthase, found in Prochlorococcus marinus subsp. pastoris (strain CCMP1986 / NIES-2087 / MED4).